The sequence spans 177 residues: MGLLSLIRGLKKKEGEARILVLGLDNAGKTTILKALSEEDITTITPTQGFNIKSLSRDGFNLKIWDIGGQKSIRPYWRNYFDQTDALIYVIDSADSKRLSESEFELTELLQEEKMTGVPLLVFANKQDLVGALAADEIASTLDLTSIRDRPWQIQACSAKQGTGLKEGMEWMMKQVK.

Glycine 2 is lipidated: N-myristoyl glycine. GTP-binding positions include 23-31 (GLDNAGKTT), 125-128 (NKQD), and alanine 159.

Belongs to the small GTPase superfamily. Arf family.

Its subcellular location is the golgi apparatus membrane. The protein resides in the cytoplasm. It localises to the cytoskeleton. It is found in the spindle. The protein localises to the nucleus. Its subcellular location is the microtubule organizing center. Functionally, small GTP-binding protein which cycles between an inactive GDP-bound and an active GTP-bound form, and the rate of cycling is regulated by guanine nucleotide exchange factors (GEF) and GTPase-activating proteins (GAP). Required for normal cytokinesis and cilia signaling. Required for targeting proteins to the ciliary membrane by releasing myristoylated protein from unc119 cargo adapters into the cilium. This Chlamydomonas reinhardtii (Chlamydomonas smithii) protein is ADP-ribosylation factor-like protein 3.